The primary structure comprises 99 residues: Small ribosomal subunit protein uS14c (99 aa).

The interval 46–66 (LQSSPRNSAPTRLHRRCSSTG) is disordered.

It belongs to the universal ribosomal protein uS14 family. As to quaternary structure, part of the 30S ribosomal subunit.

The protein resides in the plastid. It localises to the chloroplast. Its function is as follows. Binds 16S rRNA, required for the assembly of 30S particles. The protein is Small ribosomal subunit protein uS14c of Pinus thunbergii (Japanese black pine).